Reading from the N-terminus, the 279-residue chain is NAD kinase (279 aa).

Aspartate 57 acts as the Proton acceptor in catalysis. NAD(+)-binding positions include 57 to 58 (DG), 133 to 134 (NE), arginine 159, aspartate 161, and 172 to 177 (TAYNKS).

The protein belongs to the NAD kinase family. The cofactor is a divalent metal cation.

It is found in the cytoplasm. The enzyme catalyses NAD(+) + ATP = ADP + NADP(+) + H(+). Functionally, involved in the regulation of the intracellular balance of NAD and NADP, and is a key enzyme in the biosynthesis of NADP. Catalyzes specifically the phosphorylation on 2'-hydroxyl of the adenosine moiety of NAD to yield NADP. The chain is NAD kinase from Streptococcus pyogenes serotype M2 (strain MGAS10270).